The primary structure comprises 348 residues: Anthranilate phosphoribosyltransferase (348 aa).

5-phospho-alpha-D-ribose 1-diphosphate contacts are provided by residues glycine 87, 90–91, threonine 95, 97–100, 115–123, and serine 127; these read GD, NIST, and KHGNRSASG. Glycine 87 provides a ligand contact to anthranilate. Serine 99 lines the Mg(2+) pocket. Anthranilate is bound at residue asparagine 118. Arginine 173 is a binding site for anthranilate. 2 residues coordinate Mg(2+): aspartate 232 and glutamate 233.

It belongs to the anthranilate phosphoribosyltransferase family. Homodimer. Mg(2+) is required as a cofactor.

The enzyme catalyses N-(5-phospho-beta-D-ribosyl)anthranilate + diphosphate = 5-phospho-alpha-D-ribose 1-diphosphate + anthranilate. Its pathway is amino-acid biosynthesis; L-tryptophan biosynthesis; L-tryptophan from chorismate: step 2/5. Functionally, catalyzes the transfer of the phosphoribosyl group of 5-phosphorylribose-1-pyrophosphate (PRPP) to anthranilate to yield N-(5'-phosphoribosyl)-anthranilate (PRA). The protein is Anthranilate phosphoribosyltransferase of Synechococcus sp. (strain CC9311).